A 118-amino-acid chain; its full sequence is NADH-ubiquinone oxidoreductase chain 3 (118 aa).

3 helical membrane-spanning segments follow: residues 9–29, 62–82, and 87–107; these read IYLV…FLFA, LVSI…PWAV, and IDLF…IGSL.

Belongs to the complex I subunit 3 family.

The protein resides in the mitochondrion membrane. It carries out the reaction a ubiquinone + NADH + 5 H(+)(in) = a ubiquinol + NAD(+) + 4 H(+)(out). Core subunit of the mitochondrial membrane respiratory chain NADH dehydrogenase (Complex I) that is believed to belong to the minimal assembly required for catalysis. Complex I functions in the transfer of electrons from NADH to the respiratory chain. The immediate electron acceptor for the enzyme is believed to be ubiquinone. The polypeptide is NADH-ubiquinone oxidoreductase chain 3 (ND3) (Zea mays (Maize)).